We begin with the raw amino-acid sequence, 286 residues long: Glycine--tRNA ligase alpha subunit (286 aa).

Belongs to the class-II aminoacyl-tRNA synthetase family. In terms of assembly, tetramer of two alpha and two beta subunits.

It is found in the cytoplasm. It catalyses the reaction tRNA(Gly) + glycine + ATP = glycyl-tRNA(Gly) + AMP + diphosphate. The protein is Glycine--tRNA ligase alpha subunit of Campylobacter concisus (strain 13826).